We begin with the raw amino-acid sequence, 82 residues long: Cytochrome b559 subunit alpha (82 aa).

The helical transmembrane segment at 22-36 threads the bilayer; sequence VIHAITLPSIFLAGF. Residue H24 participates in heme binding.

The protein belongs to the PsbE/PsbF family. In terms of assembly, heterodimer of an alpha subunit and a beta subunit. PSII is composed of 1 copy each of membrane proteins PsbA, PsbB, PsbC, PsbD, PsbE, PsbF, PsbH, PsbI, PsbJ, PsbK, PsbL, PsbM, PsbT, PsbX, PsbY, PsbZ, Psb30/Ycf12, peripheral proteins PsbO, CyanoQ (PsbQ), PsbU, PsbV and a large number of cofactors. It forms dimeric complexes. Requires heme b as cofactor.

The protein resides in the cellular thylakoid membrane. Functionally, this b-type cytochrome is tightly associated with the reaction center of photosystem II (PSII). PSII is a light-driven water:plastoquinone oxidoreductase that uses light energy to abstract electrons from H(2)O, generating O(2) and a proton gradient subsequently used for ATP formation. It consists of a core antenna complex that captures photons, and an electron transfer chain that converts photonic excitation into a charge separation. The sequence is that of Cytochrome b559 subunit alpha from Synechococcus sp. (strain CC9311).